A 731-amino-acid polypeptide reads, in one-letter code: Cell death abnormality protein 12 (731 aa).

Residues 339-485 enclose the ELMO domain; it reads AEVQKILDIE…VVLEQLRHVL (147 aa). A PH domain is found at 544-679; that stretch reads VRINHLNYLK…WLEGLAELIG (136 aa). An SH3-binding motif is present at residues 715-718; sequence PEIP.

Interacts with psr-1. Forms a ternary complex with ced-2 and ced-5.

Its subcellular location is the cytoplasm. Functionally, involved in programmed apoptosis and necrosis. Required for the cell corpse engulfment process. Has roles in the formation of actin halos and distal tip cell migration. Negatively regulates the unc-6/Netrin receptor unc-5 to control distal tip cell migration along the anterior-posterior axis of the body. Plays no role in amphid axon outgrowth. This Caenorhabditis elegans protein is Cell death abnormality protein 12.